Reading from the N-terminus, the 612-residue chain is Actin-binding LIM protein 2 (612 aa).

LIM zinc-binding domains follow at residues 22-81 (ILCN…LYGT), 81-141 (TRCF…TLLG), 151-210 (RSCG…KFGI), and 210-270 (IRCD…ARTE). Cys-83, Cys-86, His-103, Cys-106, Cys-109, Cys-112, Cys-131, and Cys-134 together coordinate Zn(2+). Residues Cys-212, Cys-215, His-232, Cys-235, Cys-238, Cys-241, His-260, and Cys-263 each contribute to the Zn(2+) site. The segment covering 269–278 (TEDKSKETRT) has biased composition (basic and acidic residues). Disordered stretches follow at residues 269–295 (TEDK…SGSP) and 341–433 (AVGD…DNIY). Positions 279 to 295 (SSESIVSVPASSTSGSP) are enriched in low complexity. 6 positions are modified to phosphoserine: Ser-282, Ser-294, Gly-351, Arg-356, Ser-365, and Ser-368. Over residues 364 to 373 (SSPSSAGSVS) the composition is skewed to low complexity. Residues 394–416 (SGRSTPSLSVHSDSRPPSSTYQQ) show a composition bias toward polar residues. A Phosphoserine modification is found at Ser-453. The tract at residues 471 to 498 (ADTRTNSPDLDSQSLSLSSGTDQEPLQR) is disordered. Position 473 is a phosphothreonine (Thr-473). A phosphoserine mark is found at Ser-477 and Ser-579. A compositionally biased stretch (low complexity) spans 477 to 489 (SPDLDSQSLSLSS). The HP domain occupies 544–612 (TREYKIYPYD…NDLKKKALLF (69 aa)).

Interacts with F-actin and ABRA. Expressed in brain. Highly expressed in caudate/putamen, moderately expressed in the olfactory bulb. In the hippocampus, expressed in the CA1, CA2 and CA3 fields. In the cerebellum, expressed in Purkinje cells.

It localises to the cytoplasm. Functionally, may act as scaffold protein. May stimulate ABRA activity and ABRA-dependent SRF transcriptional activity. The sequence is that of Actin-binding LIM protein 2 (Ablim2) from Mus musculus (Mouse).